A 132-amino-acid chain; its full sequence is Small ribosomal subunit protein uS8 (132 aa).

It belongs to the universal ribosomal protein uS8 family. Part of the 30S ribosomal subunit. Contacts proteins S5 and S12.

In terms of biological role, one of the primary rRNA binding proteins, it binds directly to 16S rRNA central domain where it helps coordinate assembly of the platform of the 30S subunit. The polypeptide is Small ribosomal subunit protein uS8 (Bifidobacterium animalis subsp. lactis (strain AD011)).